The following is a 593-amino-acid chain: Probable tripeptidyl-peptidase SED3 (593 aa).

An N-terminal signal peptide occupies residues 1 to 18 (MLLRWHSVIPLFLAMTVA). The propeptide at 19–198 (FPNTYRTVVE…NLQAIYLSTN (180 aa)) is removed in mature form. 3 N-linked (GlcNAc...) asparagine glycosylation sites follow: Asn204, Asn261, and Asn275. A Peptidase S53 domain is found at 206 to 592 (TITPRCLREL…RILAKIVQHM (387 aa)). Residues Glu282 and Asp286 each act as charge relay system in the active site. Asn295 carries N-linked (GlcNAc...) asparagine glycosylation. The active-site Charge relay system is the Ser496. Ca(2+) is bound by residues Asp538 and Ile539. 2 N-linked (GlcNAc...) asparagine glycosylation sites follow: Asn554 and Asn566. 2 residues coordinate Ca(2+): Gly570 and Asp572.

Ca(2+) is required as a cofactor.

Its subcellular location is the secreted. The protein resides in the extracellular space. It catalyses the reaction Release of an N-terminal tripeptide from a polypeptide.. Its function is as follows. Secreted tripeptidyl-peptidase which degrades proteins at acidic pHs and is involved in virulence. The chain is Probable tripeptidyl-peptidase SED3 (SED3) from Arthroderma benhamiae (strain ATCC MYA-4681 / CBS 112371) (Trichophyton mentagrophytes).